The primary structure comprises 495 residues: OTU domain-containing protein CG3251 (495 aa).

The region spanning 29 to 150 (LFRKHMLGDA…MGHFETVLTM (122 aa)) is the OTU domain. Residues 302–364 (NFKVGAKCQV…HPLPPDEFKA (63 aa)) enclose the Tudor domain. A compositionally biased stretch (polar residues) spans 375–389 (LHNSQMGRQSVQGDQ). Residues 375 to 404 (LHNSQMGRQSVQGDQQGFVPDPMPGTAPSM) are disordered. Residues 395–404 (DPMPGTAPSM) are compositionally biased toward pro residues.

Functionally, putative OTU-type deubiquitinase. Catalytically inactive towards all diubiquitin molecules and long K48- and K63- linked ubiquitin chains in vitro. Potential modulator of apoptosis. This chain is OTU domain-containing protein CG3251, found in Drosophila melanogaster (Fruit fly).